Here is a 190-residue protein sequence, read N- to C-terminus: Prostaglandin-H2 D-isomerase (190 aa).

An N-terminal signal peptide occupies residues 1 to 22 (MATHHTLWMGLALLGVLGDLQA). N-linked (GlcNAc...) asparagine glycosylation is present at N51. C65 acts as the Nucleophile in catalysis. An N-linked (GlcNAc...) asparagine glycan is attached at N78. An intrachain disulfide couples C89 to C186.

The protein belongs to the calycin superfamily. Lipocalin family. Monomer.

It is found in the rough endoplasmic reticulum. The protein resides in the nucleus membrane. Its subcellular location is the golgi apparatus. The protein localises to the cytoplasm. It localises to the perinuclear region. It is found in the secreted. The enzyme catalyses prostaglandin H2 = prostaglandin D2. Catalyzes the conversion of PGH2 to PGD2, a prostaglandin involved in smooth muscle contraction/relaxation and a potent inhibitor of platelet aggregation. Involved in a variety of CNS functions, such as sedation, NREM sleep and PGE2-induced allodynia, and may have an anti-apoptotic role in oligodendrocytes. Binds small non-substrate lipophilic molecules, including biliverdin, bilirubin, retinal, retinoic acid and thyroid hormone, and may act as a scavenger for harmful hydrophobic molecules and as a secretory retinoid and thyroid hormone transporter. Possibly involved in development and maintenance of the blood-brain, blood-retina, blood-aqueous humor and blood-testis barrier. It is likely to play important roles in both maturation and maintenance of the central nervous system and male reproductive system. Involved in PLA2G3-dependent maturation of mast cells. PLA2G3 is secreted by immature mast cells and acts on nearby fibroblasts upstream to PTDGS to synthesize PGD2, which in turn promotes mast cell maturation and degranulation via PTGDR. The sequence is that of Prostaglandin-H2 D-isomerase (PTGDS) from Gorilla gorilla gorilla (Western lowland gorilla).